The chain runs to 348 residues: Dihydroorotase (348 aa).

Residues His17 and His19 each contribute to the Zn(2+) site. Substrate is bound by residues His19–Arg21 and Asn45. Zn(2+)-binding residues include Lys103, His140, and His178. Position 103 is an N6-carboxylysine (Lys103). Substrate is bound at residue His140. Leu223 is a substrate binding site. Asp251 is a Zn(2+) binding site. Asp251 is an active-site residue. His255 and Ala267 together coordinate substrate.

It belongs to the metallo-dependent hydrolases superfamily. DHOase family. Class II DHOase subfamily. In terms of assembly, homodimer. Requires Zn(2+) as cofactor.

It catalyses the reaction (S)-dihydroorotate + H2O = N-carbamoyl-L-aspartate + H(+). It participates in pyrimidine metabolism; UMP biosynthesis via de novo pathway; (S)-dihydroorotate from bicarbonate: step 3/3. Its function is as follows. Catalyzes the reversible cyclization of carbamoyl aspartate to dihydroorotate. The protein is Dihydroorotase of Shigella dysenteriae serotype 1 (strain Sd197).